A 321-amino-acid chain; its full sequence is 5,10-methylenetetrahydromethanopterin reductase (321 aa).

This sequence belongs to the mer family.

The protein localises to the cytoplasm. The enzyme catalyses 5-methyl-5,6,7,8-tetrahydromethanopterin + oxidized coenzyme F420-(gamma-L-Glu)(n) + H(+) = 5,10-methylenetetrahydromethanopterin + reduced coenzyme F420-(gamma-L-Glu)(n). It participates in one-carbon metabolism; methanogenesis from CO(2); methyl-coenzyme M from 5,10-methylene-5,6,7,8-tetrahydromethanopterin: step 1/2. Catalyzes the reversible reduction of methylene-H(4)MPT to methyl-H(4)MPT. The chain is 5,10-methylenetetrahydromethanopterin reductase from Methanothermobacter thermautotrophicus (strain ATCC 29096 / DSM 1053 / JCM 10044 / NBRC 100330 / Delta H) (Methanobacterium thermoautotrophicum).